Reading from the N-terminus, the 228-residue chain is Octanoyltransferase (228 aa).

The 184-residue stretch at 30–213 (NKVEDIMLLL…YFSRVFDFEP (184 aa)) folds into the BPL/LPL catalytic domain. Substrate-binding positions include 75-82 (RGGDVTYH), 143-145 (AIG), and 156-158 (GFA). The active-site Acyl-thioester intermediate is the Cys174.

Belongs to the LipB family.

It is found in the cytoplasm. It carries out the reaction octanoyl-[ACP] + L-lysyl-[protein] = N(6)-octanoyl-L-lysyl-[protein] + holo-[ACP] + H(+). Its pathway is protein modification; protein lipoylation via endogenous pathway; protein N(6)-(lipoyl)lysine from octanoyl-[acyl-carrier-protein]: step 1/2. Its function is as follows. Catalyzes the transfer of endogenously produced octanoic acid from octanoyl-acyl-carrier-protein onto the lipoyl domains of lipoate-dependent enzymes. Lipoyl-ACP can also act as a substrate although octanoyl-ACP is likely to be the physiological substrate. In Desulforamulus reducens (strain ATCC BAA-1160 / DSM 100696 / MI-1) (Desulfotomaculum reducens), this protein is Octanoyltransferase.